Reading from the N-terminus, the 764-residue chain is Subtilisin-like protease SBT3.1 (764 aa).

An N-terminal signal peptide occupies residues 1-32 (MIQTLKTDSSFRLCFAAIAFGFVFIMNGKLSS). Positions 33–120 (GTTPHEFPVY…LLENRKLGLQ (88 aa)) are cleaved as a propeptide — activation peptide. In terms of domain architecture, Inhibitor I9 spans 41 to 116 (VYIFYLGERK…EVIILLENRK (76 aa)). A glycan (N-linked (GlcNAc...) asparagine) is linked at Asn-76. Positions 124 to 610 (TWDYLGQFST…GGLVNLEKAT (487 aa)) constitute a Peptidase S8 domain. The active-site Charge relay system is the Asp-156. Asn-216 carries an N-linked (GlcNAc...) asparagine glycan. His-230 functions as the Charge relay system in the catalytic mechanism. 2 N-linked (GlcNAc...) asparagine glycosylation sites follow: Asn-245 and Asn-374. Ser-541 serves as the catalytic Charge relay system. N-linked (GlcNAc...) asparagine glycosylation is found at Asn-674, Asn-711, and Asn-747.

Belongs to the peptidase S8 family.

The protein localises to the secreted. The chain is Subtilisin-like protease SBT3.1 from Arabidopsis thaliana (Mouse-ear cress).